Here is a 90-residue protein sequence, read N- to C-terminus: Small ribosomal subunit protein bS20 (90 aa).

The protein belongs to the bacterial ribosomal protein bS20 family.

Its function is as follows. Binds directly to 16S ribosomal RNA. In Francisella tularensis subsp. tularensis (strain FSC 198), this protein is Small ribosomal subunit protein bS20.